The primary structure comprises 447 residues: Selenide, water dikinase 3 (447 aa).

Sec50 is a catalytic residue. A non-standard amino acid (selenocysteine) is located at residue Sec50. ATP-binding positions include Lys53, 103–105 (GMD), Asp123, Asp146, and 197–200 (GGQT). Asp105 lines the Mg(2+) pocket. Position 146 (Asp146) interacts with Mg(2+). A Mg(2+)-binding site is contributed by Asp301.

Belongs to the selenophosphate synthase 1 family. As to quaternary structure, homodimer. Requires Mg(2+) as cofactor. As to expression, in the embryo, expressed in retina, olfactory vesicles, tectum, pronephros ducts and myotomes at 24 hours post-fertilization and in retina, tectum, liver and intestinal bulb 3 days after fertilization.

The catalysed reaction is hydrogenselenide + ATP + H2O = selenophosphate + AMP + phosphate + 2 H(+). Functionally, synthesizes selenophosphate from selenide and ATP. This Danio rerio (Zebrafish) protein is Selenide, water dikinase 3.